The primary structure comprises 180 residues: CD-NTase/cGAS isopeptidase (180 aa).

Residues 33-165 (IVISSSTIEQ…AGSYSLSASV (133 aa)) enclose the MPN domain. Catalysis depends on Glu54, which acts as the Proton donor/acceptor. Residues His115, His117, and Asp128 each coordinate Zn(2+).

The protein belongs to the peptidase M67B family. Cap3 isopeptidase subfamily.

Metalloprotease priming reversal component of a CBASS antivirus system. CBASS (cyclic oligonucleotide-based antiphage signaling system) provides immunity against bacteriophages. The CD-NTase protein (CdnD) synthesizes cyclic nucleotides in response to infection; these serve as specific second messenger signals. The signals activate a diverse range of effectors, leading to bacterial cell death and thus abortive phage infection. A type II-C(AAG) CBASS system. Its function is as follows. Reverses the primed state of DncV, the CD-NTase. Cleaves a CdnD-GFP (green fluorescent protein) fusion protein precisely at the C-terminus of CdnD. Overexpression decreases the efficacy of CBASS protection against phage T2. Antagonism of phage defense upon overexpression is CBASS-system specific, Cap3 from this bacteria only antagonizes its cognate CBASS system and not that of C.freundii, E.coli or V.cholerae. Functionally, protects E.coli against phage T2 infection. When the cdnD-cap2-cap3-cap4 operon is introduced in E.coli there is a more than 10(3) decrease in the efficiency of T2 plaque formation. The operon does not protect against phage T5 and only about 10-fold against T7. The polypeptide is CD-NTase/cGAS isopeptidase (Enterobacter hormaechei subsp. hoffmannii (strain UCI 50)).